Here is a 91-residue protein sequence, read N- to C-terminus: Chorion class B protein M3A5 (91 aa).

A central domain region spans residues 1–51 (VASENRYEGTVGVSGNLPFLGTADVAGEFPTAGIGEILYGCGNGAVGITRE). Positions 52–91 (GGLGYGAGYGGGYGLGYGGYGGGYGLGYGGYGGCGCGCGY) are right arm (Gly-rich tandem repeats).

It belongs to the chorion protein family.

Functionally, this protein is one of many from the eggshell of the silk moth. The protein is Chorion class B protein M3A5 of Bombyx mori (Silk moth).